We begin with the raw amino-acid sequence, 477 residues long: Aspartyl/glutamyl-tRNA(Asn/Gln) amidotransferase subunit B (477 aa).

Belongs to the GatB/GatE family. GatB subfamily. In terms of assembly, heterotrimer of A, B and C subunits.

It carries out the reaction L-glutamyl-tRNA(Gln) + L-glutamine + ATP + H2O = L-glutaminyl-tRNA(Gln) + L-glutamate + ADP + phosphate + H(+). The catalysed reaction is L-aspartyl-tRNA(Asn) + L-glutamine + ATP + H2O = L-asparaginyl-tRNA(Asn) + L-glutamate + ADP + phosphate + 2 H(+). Its function is as follows. Allows the formation of correctly charged Asn-tRNA(Asn) or Gln-tRNA(Gln) through the transamidation of misacylated Asp-tRNA(Asn) or Glu-tRNA(Gln) in organisms which lack either or both of asparaginyl-tRNA or glutaminyl-tRNA synthetases. The reaction takes place in the presence of glutamine and ATP through an activated phospho-Asp-tRNA(Asn) or phospho-Glu-tRNA(Gln). In Ureaplasma urealyticum serovar 10 (strain ATCC 33699 / Western), this protein is Aspartyl/glutamyl-tRNA(Asn/Gln) amidotransferase subunit B.